Reading from the N-terminus, the 344-residue chain is Anthranilate phosphoribosyltransferase (344 aa).

Residues Gly-79, 82 to 83 (GD), Thr-87, 89 to 92 (NIST), 107 to 115 (KHGNRSVSS), and Ser-119 each bind 5-phospho-alpha-D-ribose 1-diphosphate. Gly-79 serves as a coordination point for anthranilate. Ser-91 contributes to the Mg(2+) binding site. Position 110 (Asn-110) interacts with anthranilate. Arg-165 contributes to the anthranilate binding site. Mg(2+) is bound by residues Asp-224 and Glu-225.

This sequence belongs to the anthranilate phosphoribosyltransferase family. Homodimer. It depends on Mg(2+) as a cofactor.

The enzyme catalyses N-(5-phospho-beta-D-ribosyl)anthranilate + diphosphate = 5-phospho-alpha-D-ribose 1-diphosphate + anthranilate. It functions in the pathway amino-acid biosynthesis; L-tryptophan biosynthesis; L-tryptophan from chorismate: step 2/5. In terms of biological role, catalyzes the transfer of the phosphoribosyl group of 5-phosphorylribose-1-pyrophosphate (PRPP) to anthranilate to yield N-(5'-phosphoribosyl)-anthranilate (PRA). The sequence is that of Anthranilate phosphoribosyltransferase from Salinibacter ruber (strain DSM 13855 / M31).